Reading from the N-terminus, the 387-residue chain is Sorting nexin-7 (387 aa).

The PX domain occupies 30–151 (KDLFITVDEP…IFLTAQAWEL (122 aa)). The a 1,2-diacyl-sn-glycero-3-phospho-(1D-myo-inositol-3-phosphate) site is built by arginine 73, glutamine 75, lysine 103, and arginine 117. Residues 178–387 (GVKNRPEEFM…HLEETSEDKP (210 aa)) enclose the BAR domain.

Belongs to the sorting nexin family. As to quaternary structure, heterodimer; heterodimerizes with SNX4.

It localises to the early endosome membrane. Its function is as follows. Involved in the regulation of endocytosis and in several stages of intracellular trafficking. Together with SNX4, involved in autophagosome assembly by regulating trafficking and recycling of phospholipid scramblase ATG9A. In Macaca fascicularis (Crab-eating macaque), this protein is Sorting nexin-7 (SNX7).